The following is a 137-amino-acid chain: Large-conductance mechanosensitive channel (137 aa).

Transmembrane regions (helical) follow at residues 10 to 30 (FAMR…AAFG) and 76 to 96 (GVFI…FMAI).

Belongs to the MscL family. Homopentamer.

It is found in the cell inner membrane. In terms of biological role, channel that opens in response to stretch forces in the membrane lipid bilayer. May participate in the regulation of osmotic pressure changes within the cell. This chain is Large-conductance mechanosensitive channel, found in Klebsiella pneumoniae subsp. pneumoniae (strain ATCC 700721 / MGH 78578).